Here is a 223-residue protein sequence, read N- to C-terminus: Neurotrophic factor BDNF precursor form (223 aa).

A signal peptide spans 1-5 (SCMKA). Residues 6–114 (APMKEVSLRG…AANMSMRVRR (109 aa)) constitute a propeptide that is removed on maturation. The N-linked (GlcNAc...) asparagine glycan is linked to Asn107. Disulfide bonds link Cys127–Cys194 and Cys172–Cys223.

It belongs to the NGF-beta family.

The protein resides in the secreted. Promotes the survival of neuronal populations that are all located either in the central nervous system or directly connected to it. The protein is Neurotrophic factor BDNF precursor form (BDNF) of Ramphotyphlops sp. (strain YPM 13663) (Blind snake).